Consider the following 216-residue polypeptide: UPF0502 protein Pmen_2627 (216 aa).

The protein belongs to the UPF0502 family.

This Ectopseudomonas mendocina (strain ymp) (Pseudomonas mendocina) protein is UPF0502 protein Pmen_2627.